Here is a 490-residue protein sequence, read N- to C-terminus: Nuclear distribution protein PAC1 (490 aa).

The stretch at Ser65–Asn96 forms a coiled coil. WD repeat units follow at residues Gln118 to Pro157, Ala163 to Asn204, Gly205 to Ser245, Glu251 to Met290, Gly293 to Ile327, Pro328 to His367, Gly388 to Ser427, and Gly436 to Lys487.

The protein belongs to the WD repeat LIS1/nudF family. Self-associates. Interacts with NDL1 and dynein.

It is found in the cytoplasm. Its subcellular location is the cytoskeleton. It localises to the spindle pole. Functionally, positively regulates the activity of the minus-end directed microtubule motor protein dynein. Plays a central role in positioning the mitotic spindle at the bud neck during cell division. Targets cytoplasmic dynein to microtubule plus ends, thereby promoting dynein-mediated microtubule sliding along the bud cortex and consequently the movement of the mitotic spindle to the bud neck. In Candida tropicalis (strain ATCC MYA-3404 / T1) (Yeast), this protein is Nuclear distribution protein PAC1.